The following is a 583-amino-acid chain: Peptidyl-prolyl cis-trans isomerase FKBP10 (583 aa).

The signal sequence occupies residues 1–27 (MLRAGPPSHTLLRLPLLQLLLLLLVQA). PPIase FKBP-type domains are found at residues 63–151 (GDFV…LDVW), 175–263 (SDFV…IDVH), 287–375 (GDFM…IDFH), and 400–487 (GDFV…VSRE). N-linked (GlcNAc...) asparagine glycosylation is found at asparagine 71, asparagine 183, and asparagine 295. 2 consecutive EF-hand domains span residues 498 to 533 (WHED…QVSE) and 543 to 578 (DPEK…DQDR). The Ca(2+) site is built by aspartate 511, asparagine 513, aspartate 515, glutamate 517, glutamate 522, aspartate 556, asparagine 558, aspartate 560, lysine 562, and glutamate 567. The tract at residues 534–583 (GKGRLLPGQDPEKTIGDMFQNQDRNQDGKITAEELKLKSDEDQDRVHEEL) is disordered. A compositionally biased stretch (basic and acidic residues) spans 557-583 (RNQDGKITAEELKLKSDEDQDRVHEEL). A Prevents secretion from ER motif is present at residues 580–583 (HEEL).

Post-translationally, glycosylated and phosphorylated.

The protein localises to the endoplasmic reticulum lumen. The catalysed reaction is [protein]-peptidylproline (omega=180) = [protein]-peptidylproline (omega=0). Its activity is regulated as follows. Inhibited by both FK506 and rapamycin, but not by cyclosporin A. Functionally, PPIases accelerate the folding of proteins during protein synthesis. The chain is Peptidyl-prolyl cis-trans isomerase FKBP10 (FKBP10) from Bos taurus (Bovine).